Here is a 414-residue protein sequence, read N- to C-terminus: MKIYLVGGAIRDRLLNIPVRDRDWVVVGIRDPKEMLKKNYQQVGKGFPVFIHPKTHEEYSLARTEKKNGVGHTGFLFDFSSRITLKEDLKRRDLTINAIAQDSSGKIIDFFNGKKDIQKKILRHVSYSFQEDPLRVLRIARFAALLSHLGFYIAKKTLSLMKLICSRKELLYLTPERIWKETQKGLSTQNPHVYFQVLYSCNALFFLFPEINYFYKKTYFLNSFIKHINLVQYSLIELSKISKVTKDINIRFSYFLQFFYYVYPIPNIGTKDYFFYKKPAFLLKKMLIRLKIPKETSEIIFFLCGFHNFLQNINIQSSKLIIKFFNIIDVWRKPNRLNQLIYLDFYNFNSLKNKKNDFFLGKLLKYMFSLIKDISVCSFIKEKKFKGIEIKNDLNRLRIQSFKEMKEKIILNIF.

Residues Gly8 and Arg11 each contribute to the ATP site. CTP-binding residues include Gly8 and Arg11. Positions 21 and 23 each coordinate Mg(2+). Arg92, Arg138, and Arg141 together coordinate ATP. CTP-binding residues include Arg92, Arg138, and Arg141.

This sequence belongs to the tRNA nucleotidyltransferase/poly(A) polymerase family. Bacterial CCA-adding enzyme type 2 subfamily. Requires Mg(2+) as cofactor.

It catalyses the reaction a tRNA precursor + 2 CTP + ATP = a tRNA with a 3' CCA end + 3 diphosphate. The enzyme catalyses a tRNA with a 3' CCA end + 2 CTP + ATP = a tRNA with a 3' CCACCA end + 3 diphosphate. In terms of biological role, catalyzes the addition and repair of the essential 3'-terminal CCA sequence in tRNAs without using a nucleic acid template. Adds these three nucleotides in the order of C, C, and A to the tRNA nucleotide-73, using CTP and ATP as substrates and producing inorganic pyrophosphate. tRNA 3'-terminal CCA addition is required both for tRNA processing and repair. Also involved in tRNA surveillance by mediating tandem CCA addition to generate a CCACCA at the 3' terminus of unstable tRNAs. While stable tRNAs receive only 3'-terminal CCA, unstable tRNAs are marked with CCACCA and rapidly degraded. The protein is CCA-adding enzyme of Buchnera aphidicola subsp. Cinara cedri (strain Cc).